A 591-amino-acid polypeptide reads, in one-letter code: V-type ATP synthase alpha chain (591 aa).

Residue 231–238 (GPFGSGKT) participates in ATP binding.

This sequence belongs to the ATPase alpha/beta chains family.

It carries out the reaction ATP + H2O + 4 H(+)(in) = ADP + phosphate + 5 H(+)(out). Functionally, produces ATP from ADP in the presence of a proton gradient across the membrane. The V-type alpha chain is a catalytic subunit. The protein is V-type ATP synthase alpha chain of Clostridium novyi (strain NT).